Consider the following 82-residue polypeptide: MMQRVAKLSVQTASRVSFKTCTNNFSAATATKSTSSGSVPSFFTESTSTPLNQSKTNTSTLNKSSKLNNNLIDNIMYVYFIY.

The span at 29 to 38 (TATKSTSSGS) shows a compositional bias: low complexity. The segment at 29–64 (TATKSTSSGSVPSFFTESTSTPLNQSKTNTSTLNKS) is disordered. The segment covering 39–50 (VPSFFTESTSTP) has biased composition (polar residues). Residues 51-64 (LNQSKTNTSTLNKS) are compositionally biased toward low complexity.

This is an uncharacterized protein from Dictyostelium discoideum (Social amoeba).